The chain runs to 380 residues: Transmembrane protein 229A (380 aa).

Residues 1-40 (MAGSDVDSEGPARRGGAARRPGAPGGPGSEAAAGCPEPLS) are disordered. The next 2 membrane-spanning stretches (helical) occupy residues 51-71 (LPAWMRLYFYGMHGITLDVLV) and 117-137 (AFVFNFLLYPSAHVGLQTLAG). Positions 188–236 (RQQQQQQQQQQQQRRGALPVPPGARVPTAAGARRRRPRGPRGAGGAPSQ) are disordered. Over residues 190 to 202 (QQQQQQQQQQQRR) the composition is skewed to low complexity. The next 4 helical transmembrane spans lie at 244-264 (FLFFGMHGFLDEIFFTFFFNV), 278-298 (LWSFFMYGSCSFVVEKLYFHL), 310-330 (VPIYVIFIYVWELSWGLGLRT), and 343-363 (LNFMGLITLMYLPGWIFLSVY).

Belongs to the TMEM229 family.

The protein resides in the membrane. This is Transmembrane protein 229A (TMEM229A) from Homo sapiens (Human).